We begin with the raw amino-acid sequence, 75 residues long: Bacteriocin lactacin-F subunit LafA (75 aa).

Residues 1 to 18 constitute a propeptide that is removed on maturation; the sequence is MKQFNYLSHKDLAVVVGG.

The protein belongs to the bacteriocin class IIB family. This bacteriocin depends upon the complementation of two peptides for activity: LafA and LafX. Associated with a 180 kDa bacteriocin complex.

Functionally, heat stable bacteriocin active against Enterococcus faecalis and other Lactobacilli. The protein is Bacteriocin lactacin-F subunit LafA (lafA) of Lactobacillus johnsonii (strain CNCM I-12250 / La1 / NCC 533).